A 508-amino-acid chain; its full sequence is Ribonuclease Y (508 aa).

The helical transmembrane segment at 1-21 (MMLWYIVAGAGGLLIGYLIAN) threads the bilayer. One can recognise a KH domain in the interval 198–283 (TVSTVSLPSD…EMYEKAKQEV (86 aa)). The HD domain maps to 324–417 (VLNHSIEVAL…VAAADALSAA (94 aa)).

This sequence belongs to the RNase Y family.

Its subcellular location is the cell membrane. In terms of biological role, endoribonuclease that initiates mRNA decay. In Thermotoga maritima (strain ATCC 43589 / DSM 3109 / JCM 10099 / NBRC 100826 / MSB8), this protein is Ribonuclease Y.